Reading from the N-terminus, the 506-residue chain is 2,3-bisphosphoglycerate-independent phosphoglycerate mutase (506 aa).

Positions 12 and 63 each coordinate Mn(2+). Residue S63 is the Phosphoserine intermediate of the active site. Substrate contacts are provided by residues H122, 151 to 152, R182, R188, 253 to 256, and K323; these read RD and RADR. Mn(2+) contacts are provided by D390, H394, D432, H433, and H451.

This sequence belongs to the BPG-independent phosphoglycerate mutase family. As to quaternary structure, monomer. Mn(2+) serves as cofactor.

It catalyses the reaction (2R)-2-phosphoglycerate = (2R)-3-phosphoglycerate. It participates in carbohydrate degradation; glycolysis; pyruvate from D-glyceraldehyde 3-phosphate: step 3/5. Functionally, catalyzes the interconversion of 2-phosphoglycerate and 3-phosphoglycerate. This is 2,3-bisphosphoglycerate-independent phosphoglycerate mutase from Wolbachia pipientis wMel.